We begin with the raw amino-acid sequence, 964 residues long: DNA mismatch repair protein MSH2 (964 aa).

688-695 (GPNMGGKS) contributes to the ATP binding site. The tract at residues 851-964 (DQSFGIHVAE…YLKYIKALLL (114 aa)) is interaction with MSH6.

The protein belongs to the DNA mismatch repair MutS family. As to quaternary structure, heterodimer consisting of MSH2-MSH6 (MutS alpha) or MSH2-MSH3 (MutS beta). Both heterodimers form a ternary complex with MutL alpha (MLH1-PMS1). MutS beta also forms a ternary complex with MutL beta (MLH1-MLH3), and possibly with a MLH1-MLH2 heterodimer. Both heterodimers interact with proliferating cell nuclear antigen (PCNA/POL30). This interaction is disrupted upon binding of the MutS heterodimers to mismatch DNA. Interacts with SAW1.

The protein resides in the nucleus. With respect to regulation, inhibited by Cd(2+). Its function is as follows. Component of the post-replicative DNA mismatch repair system (MMR). Forms two different heterodimers: MutS alpha (MSH2-MSH6 heterodimer) and MutS beta (MSH2-MSH3 heterodimer), which bind to DNA mismatches thereby initiating DNA repair. MSH2 seems to act as a scaffold for the other MutS homologs that provide substrate-binding and substrate specificity. When bound, heterodimers bend the DNA helix and shield approximately 20 base pairs. MutS alpha acts mainly to repair base-base and single insertion-deletion mismatches that occur during replication, but can also repair longer insertion-deletion loops (IDLs), although with decreasing efficiency as the size of the extrahelical loop increases. MutS beta acts mainly to repair IDLs from 2 to 13 nucleotides in size, but can also repair base-base and single insertion-deletion mismatches. After mismatch binding, MutS alpha or beta form a ternary complex with a MutL heterodimer, which is thought to be responsible for directing the downstream MMR events, including strand discrimination, excision, and resynthesis. ATP binding and hydrolysis play a pivotal role in mismatch repair functions. Both subunits bind ATP, but with differing affinities, and their ATPase kinetics are also very different. MSH6 binds and hydrolyzes ATP rapidly, whereas MSH2 catalyzes ATP at a substantially slower rate. Binding to a mismatched base pair suppresses MSH6-catalyzed ATP hydrolysis, but not the activity of MSH2. ATP binding to both subunits is necessary to trigger a change in MutS alpha interaction with mismatched DNA, converting MutS alpha into a sliding clamp capable of hydrolysis-independent movement along DNA, and also facilitates formation of ternary complexes containing MutS and MutL proteins and the mismatch. MutS beta also has a role in regulation of heteroduplex formation during mitotic and meiotic recombination. MutS beta binds to DNA flap structures predicted to form during recombination, and is required for 3' non-homologous tail removal (NHTR). MutS beta-binding alters the DNA conformation of its substrate at the ds/ssDNA junction and may facilitate its recognition and/or cleavage by the downstream nucleotide excision repair (NER) RAD1-RAD10 endonuclease. The sequence is that of DNA mismatch repair protein MSH2 (MSH2) from Saccharomyces cerevisiae (strain ATCC 204508 / S288c) (Baker's yeast).